The following is a 340-amino-acid chain: MTENALLLLNLGSPDSTRVEDVRRYLDQFLMDPYVVDLPWPLRRLLVSLILVKRPAESAHAYSSIWWDEGSPLIVLSRRLQEAIKPHWPHGPVELAMRYGQPAIEKVLLDLARRGIRRVTLAPLYPQFADSTTTTAEQEVRRVIAAHRLELEVSTLPPFYDQPVYLDALVESVHPYLQQPHDHLLLSFHGLPERHIRKLVKDPAHDLLAESSRNVSPEALALCYRSQCLRTAEAFAERAGLEQGRWSVSFQSRLGRAKWIEPYTDAKLDELVQRGVKRLLVMCPAFVADCIETLEEIGMRGREQFISAGGEDLVLIPCLNDHPAWVGALADMSGRLARPL.

The Fe cation site is built by H189 and E292.

The protein belongs to the ferrochelatase family.

It localises to the cytoplasm. The enzyme catalyses heme b + 2 H(+) = protoporphyrin IX + Fe(2+). The protein operates within porphyrin-containing compound metabolism; protoheme biosynthesis; protoheme from protoporphyrin-IX: step 1/1. In terms of biological role, catalyzes the ferrous insertion into protoporphyrin IX. The sequence is that of Ferrochelatase from Pseudomonas paraeruginosa (strain DSM 24068 / PA7) (Pseudomonas aeruginosa (strain PA7)).